The sequence spans 434 residues: Protein maelstrom homolog (434 aa).

Positions 4 to 73 form a DNA-binding region, HMG box; that stretch reads RKASRNAYYF…AQGKDPGPSE (70 aa). The interval 357-385 is disordered; that stretch reads SHFNSSNEEQRSNTPIGDYPSRAKISGQN.

It belongs to the maelstrom family. In terms of assembly, interacts with SMARCB1, SIN3B and DDX4. Interacts with piRNA-associated proteins TDRD1, PIWIL1 and PIWIL2. Interacts with TEX19. As to expression, testis-specific. Expressed in various cancer cell lines, probably due to demethylation of its promoter.

It localises to the cytoplasm. It is found in the nucleus. In terms of biological role, plays a central role during spermatogenesis by repressing transposable elements and preventing their mobilization, which is essential for the germline integrity. Acts via the piRNA metabolic process, which mediates the repression of transposable elements during meiosis by forming complexes composed of piRNAs and Piwi proteins and governs the methylation and subsequent repression of transposons. Its association with piP-bodies suggests a participation in the secondary piRNAs metabolic process. Required for the localization of germ-cell factors to the meiotic nuage. The sequence is that of Protein maelstrom homolog (MAEL) from Homo sapiens (Human).